The primary structure comprises 113 residues: Ribulose bisphosphate carboxylase small subunit (113 aa).

This sequence belongs to the RuBisCO small chain family. Heterohexadecamer of 8 large and 8 small subunits.

The protein resides in the carboxysome. In terms of biological role, ruBisCO catalyzes two reactions: the carboxylation of D-ribulose 1,5-bisphosphate, the primary event in carbon dioxide fixation, as well as the oxidative fragmentation of the pentose substrate in the photorespiration process. Both reactions occur simultaneously and in competition at the same active site. Although the small subunit is not catalytic it is essential for maximal activity. The sequence is that of Ribulose bisphosphate carboxylase small subunit from Synechococcus sp. (strain WH7803).